Here is a 144-residue protein sequence, read N- to C-terminus: Large ribosomal subunit protein uL13 (144 aa).

It belongs to the universal ribosomal protein uL13 family. As to quaternary structure, part of the 50S ribosomal subunit.

Functionally, this protein is one of the early assembly proteins of the 50S ribosomal subunit, although it is not seen to bind rRNA by itself. It is important during the early stages of 50S assembly. This Clostridium novyi (strain NT) protein is Large ribosomal subunit protein uL13.